Reading from the N-terminus, the 162-residue chain is Functional amyloid chaperone FapA (162 aa).

A signal peptide spans 1 to 28 (MSGSSLRIVVPALLVIVGSVPVSLPAHA).

Belongs to the FapA family. Monomer in solution. Interacts with FapC but not FapB in vitro.

It is found in the periplasm. Functionally, an intrinsically disordered chaperone for fibril amyloid FapC that guards against fibrillation within the periplasm. Upon overexpression of the endogenous six-gene locus (fapA-fapF), cells form large clumps during liquid growth, make large amounts of biofilm and produce amyloid fibrils. In Pseudomonas aeruginosa (strain ATCC 15692 / DSM 22644 / CIP 104116 / JCM 14847 / LMG 12228 / 1C / PRS 101 / PAO1), this protein is Functional amyloid chaperone FapA.